Consider the following 475-residue polypeptide: tRNA-2-methylthio-N(6)-dimethylallyladenosine synthase (475 aa).

Residues 1–20 (MEQNLTTERSETSSSRAGTA) form a disordered region. Residues 25-145 (KKVFVKTYGC…LPSVVTRARA (121 aa)) enclose the MTTase N-terminal domain. The [4Fe-4S] cluster site is built by Cys34, Cys70, Cys108, Cys186, Cys190, and Cys193. Positions 172-404 (RSRGVTAFLT…QALLAEQQRA (233 aa)) constitute a Radical SAM core domain. The region spanning 407–469 (ESLVGTEIDL…GHSLFCEPAG (63 aa)) is the TRAM domain.

This sequence belongs to the methylthiotransferase family. MiaB subfamily. Monomer. [4Fe-4S] cluster serves as cofactor.

It localises to the cytoplasm. The enzyme catalyses N(6)-dimethylallyladenosine(37) in tRNA + (sulfur carrier)-SH + AH2 + 2 S-adenosyl-L-methionine = 2-methylsulfanyl-N(6)-dimethylallyladenosine(37) in tRNA + (sulfur carrier)-H + 5'-deoxyadenosine + L-methionine + A + S-adenosyl-L-homocysteine + 2 H(+). In terms of biological role, catalyzes the methylthiolation of N6-(dimethylallyl)adenosine (i(6)A), leading to the formation of 2-methylthio-N6-(dimethylallyl)adenosine (ms(2)i(6)A) at position 37 in tRNAs that read codons beginning with uridine. The protein is tRNA-2-methylthio-N(6)-dimethylallyladenosine synthase of Chelativorans sp. (strain BNC1).